The chain runs to 325 residues: ATP-dependent 6-phosphofructokinase (325 aa).

Gly12 contributes to the ATP binding site. 22 to 26 (RTIVK) contributes to the ADP binding site. Residues 73–74 (RY) and 103–106 (GDGS) each bind ATP. Asp104 provides a ligand contact to Mg(2+). 126–128 (TID) provides a ligand contact to substrate. Asp128 serves as the catalytic Proton acceptor. Arg155 serves as a coordination point for ADP. 170-172 (MGH) is a substrate binding site. Residues 186–188 (GAE), Lys213, and 215–217 (KRS) contribute to the ADP site. Residues Glu224, Arg246, and 252-255 (HTQR) each bind substrate.

It belongs to the phosphofructokinase type A (PFKA) family. ATP-dependent PFK group I subfamily. Prokaryotic clade 'B1' sub-subfamily. As to quaternary structure, homotetramer. Mg(2+) serves as cofactor.

It is found in the cytoplasm. It carries out the reaction beta-D-fructose 6-phosphate + ATP = beta-D-fructose 1,6-bisphosphate + ADP + H(+). Its pathway is carbohydrate degradation; glycolysis; D-glyceraldehyde 3-phosphate and glycerone phosphate from D-glucose: step 3/4. Allosterically activated by ADP and other diphosphonucleosides, and allosterically inhibited by phosphoenolpyruvate. Catalyzes the phosphorylation of D-fructose 6-phosphate to fructose 1,6-bisphosphate by ATP, the first committing step of glycolysis. The sequence is that of ATP-dependent 6-phosphofructokinase from Mycoplasma mobile (strain ATCC 43663 / 163K / NCTC 11711) (Mesomycoplasma mobile).